We begin with the raw amino-acid sequence, 309 residues long: tRNA dimethylallyltransferase (309 aa).

Residue 13 to 20 (GPTAVGKS) coordinates ATP. 15 to 20 (TAVGKS) contributes to the substrate binding site.

The protein belongs to the IPP transferase family. As to quaternary structure, monomer. Mg(2+) serves as cofactor.

The catalysed reaction is adenosine(37) in tRNA + dimethylallyl diphosphate = N(6)-dimethylallyladenosine(37) in tRNA + diphosphate. Its function is as follows. Catalyzes the transfer of a dimethylallyl group onto the adenine at position 37 in tRNAs that read codons beginning with uridine, leading to the formation of N6-(dimethylallyl)adenosine (i(6)A). In Lacticaseibacillus casei (strain BL23) (Lactobacillus casei), this protein is tRNA dimethylallyltransferase.